The chain runs to 121 residues: Small ribosomal subunit protein bS6 (121 aa).

The disordered stretch occupies residues 102-121 (MMRNVEREEARKAQQQEYAA). Positions 105-115 (NVEREEARKAQ) are enriched in basic and acidic residues.

Belongs to the bacterial ribosomal protein bS6 family.

Its function is as follows. Binds together with bS18 to 16S ribosomal RNA. The protein is Small ribosomal subunit protein bS6 of Polaromonas sp. (strain JS666 / ATCC BAA-500).